The sequence spans 576 residues: Septation ring formation regulator EzrA (576 aa).

At 1–7 (MSSTVII) the chain is on the extracellular side. Residues 8–26 (LIVVLLVILVAFYAFAILM) form a helical membrane-spanning segment. Residues 27–576 (RKKTEDRILA…FKNKPTPDYL (550 aa)) lie on the Cytoplasmic side of the membrane. 2 coiled-coil regions span residues 105 to 134 (RARE…VAQL) and 277 to 301 (EQFE…LYAI).

It belongs to the EzrA family.

It is found in the cell membrane. Functionally, negative regulator of FtsZ ring formation; modulates the frequency and position of FtsZ ring formation. Inhibits FtsZ ring formation at polar sites. Interacts either with FtsZ or with one of its binding partners to promote depolymerization. The protein is Septation ring formation regulator EzrA of Lactococcus lactis subsp. lactis (strain IL1403) (Streptococcus lactis).